A 61-amino-acid polypeptide reads, in one-letter code: Metallothionein-1F (61 aa).

Residue Met-1 is modified to N-acetylmethionine. Positions 1–29 are beta; that stretch reads MDPNCSCAAGVSCTCAGSCKCKECKCTSC. A divalent metal cation contacts are provided by Cys-5, Cys-7, Cys-13, Cys-15, Cys-19, Cys-21, Cys-24, Cys-26, Cys-29, Cys-33, Cys-34, Cys-36, Cys-37, Cys-41, Cys-44, Cys-48, Cys-50, and Cys-57. The tract at residues 30 to 61 is alpha; the sequence is KKSCCSCCPVGCSKCAQGCVCKGASEKCSCCD. Ser-58 is modified (phosphoserine). The a divalent metal cation site is built by Cys-59 and Cys-60.

It belongs to the metallothionein superfamily. Type 1 family. Monomer.

In terms of biological role, metallothioneins have a high content of cysteine residues that bind various heavy metals; these proteins are transcriptionally regulated by both heavy metals and glucocorticoids. The sequence is that of Metallothionein-1F (MT1F) from Homo sapiens (Human).